We begin with the raw amino-acid sequence, 212 residues long: Pyridoxine/pyridoxamine 5'-phosphate oxidase (212 aa).

Residues R8–Y11 and K66 each bind substrate. FMN contacts are provided by residues R61–K66, F76–T77, R82, K83, and Q105. Residues Y123, R127, and S131 each coordinate substrate. FMN contacts are provided by residues Q140–S141 and W185. R191–H193 is a binding site for substrate. R195 contacts FMN.

Belongs to the pyridoxamine 5'-phosphate oxidase family. As to quaternary structure, homodimer. FMN serves as cofactor.

It carries out the reaction pyridoxamine 5'-phosphate + O2 + H2O = pyridoxal 5'-phosphate + H2O2 + NH4(+). The enzyme catalyses pyridoxine 5'-phosphate + O2 = pyridoxal 5'-phosphate + H2O2. It functions in the pathway cofactor metabolism; pyridoxal 5'-phosphate salvage; pyridoxal 5'-phosphate from pyridoxamine 5'-phosphate: step 1/1. The protein operates within cofactor metabolism; pyridoxal 5'-phosphate salvage; pyridoxal 5'-phosphate from pyridoxine 5'-phosphate: step 1/1. Catalyzes the oxidation of either pyridoxine 5'-phosphate (PNP) or pyridoxamine 5'-phosphate (PMP) into pyridoxal 5'-phosphate (PLP). The protein is Pyridoxine/pyridoxamine 5'-phosphate oxidase of Shewanella sp. (strain MR-4).